The sequence spans 304 residues: MAEHLASIFGTEKDRVNCPFYFKIGACRHGDRCSRLHNRPTVSPTIVLANMYQRPDMITPGVDAQGQPIDPEKMQEHFEDFYEDIYEELSKFGEVETLNVCDNLADHMIGNVYVQFREEEQAVAAHNALQGRFYSGRPIIVEYSPVTDFREATCRQFEENSCNRGGYCNFMHVKQIGRELRRKLYGGRSRRSHGRSRSPSPRHRRGNRDRDDFRRERDGYRGGGDGYRGGGGGGGGDGYRGGDSYRGGGGGGRRGGGSRYDRYDDGGRRRHGSPPRRARSPVRESSEERRAKIEQWNREREEKP.

The C3H1-type 1 zinc-finger motif lies at 12–40; it reads EKDRVNCPFYFKIGACRHGDRCSRLHNRP. The region spanning 44–146 is the RRM domain; that stretch reads PTIVLANMYQ…RPIIVEYSPV (103 aa). The segment at 148 to 175 adopts a C3H1-type 2 zinc-finger fold; the sequence is DFREATCRQFEENSCNRGGYCNFMHVKQ. A compositionally biased stretch (basic residues) spans 184–207; the sequence is LYGGRSRRSHGRSRSPSPRHRRGN. Residues 184 to 304 are disordered; that stretch reads LYGGRSRRSH…QWNREREEKP (121 aa). The segment covering 208–220 has biased composition (basic and acidic residues); sequence RDRDDFRRERDGY. A compositionally biased stretch (gly residues) spans 221–258; it reads RGGGDGYRGGGGGGGGDGYRGGDSYRGGGGGGRRGGGS. Residues 268 to 280 are compositionally biased toward basic residues; it reads RRRHGSPPRRARS. A compositionally biased stretch (basic and acidic residues) spans 281–304; the sequence is PVRESSEERRAKIEQWNREREEKP.

Belongs to the splicing factor SR family.

The protein localises to the nucleus. In terms of biological role, necessary for the splicing of pre-mRNA. This chain is Splicing factor U2af small subunit B (U2AF35B), found in Oryza sativa subsp. japonica (Rice).